The sequence spans 503 residues: Maturase K (503 aa).

It belongs to the intron maturase 2 family. MatK subfamily.

The protein localises to the plastid. The protein resides in the chloroplast. Functionally, usually encoded in the trnK tRNA gene intron. Probably assists in splicing its own and other chloroplast group II introns. In Rosa foetida (Austrian briar), this protein is Maturase K.